Here is a 425-residue protein sequence, read N- to C-terminus: Serine--tRNA ligase (425 aa).

231-233 provides a ligand contact to L-serine; that stretch reads TAE. 262-264 serves as a coordination point for ATP; sequence RSE. Residue glutamate 285 coordinates L-serine. An ATP-binding site is contributed by 349–352; the sequence is EISS. Position 385 (serine 385) interacts with L-serine.

Belongs to the class-II aminoacyl-tRNA synthetase family. Type-1 seryl-tRNA synthetase subfamily. In terms of assembly, homodimer. The tRNA molecule binds across the dimer.

It is found in the cytoplasm. It carries out the reaction tRNA(Ser) + L-serine + ATP = L-seryl-tRNA(Ser) + AMP + diphosphate + H(+). It catalyses the reaction tRNA(Sec) + L-serine + ATP = L-seryl-tRNA(Sec) + AMP + diphosphate + H(+). It functions in the pathway aminoacyl-tRNA biosynthesis; selenocysteinyl-tRNA(Sec) biosynthesis; L-seryl-tRNA(Sec) from L-serine and tRNA(Sec): step 1/1. Functionally, catalyzes the attachment of serine to tRNA(Ser). Is also able to aminoacylate tRNA(Sec) with serine, to form the misacylated tRNA L-seryl-tRNA(Sec), which will be further converted into selenocysteinyl-tRNA(Sec). The chain is Serine--tRNA ligase from Exiguobacterium sibiricum (strain DSM 17290 / CCUG 55495 / CIP 109462 / JCM 13490 / 255-15).